Here is a 271-residue protein sequence, read N- to C-terminus: Pyrroline-5-carboxylate reductase (271 aa).

It belongs to the pyrroline-5-carboxylate reductase family.

It localises to the cytoplasm. The catalysed reaction is L-proline + NADP(+) = (S)-1-pyrroline-5-carboxylate + NADPH + 2 H(+). It catalyses the reaction L-proline + NAD(+) = (S)-1-pyrroline-5-carboxylate + NADH + 2 H(+). Its pathway is amino-acid biosynthesis; L-proline biosynthesis; L-proline from L-glutamate 5-semialdehyde: step 1/1. Its function is as follows. Catalyzes the reduction of 1-pyrroline-5-carboxylate (PCA) to L-proline. The polypeptide is Pyrroline-5-carboxylate reductase (Staphylococcus haemolyticus (strain JCSC1435)).